The chain runs to 90 residues: Electron transfer flavoprotein regulatory factor 1 (90 aa).

It belongs to the complex I LYR family. As to quaternary structure, homotetramer. Interacts with NDUFAB1. Interacts with ETFA. Interacts with ETFB.

The protein localises to the mitochondrion. Functionally, acts as a regulator of the electron transfer flavoprotein by promoting the removal of flavin from the ETF holoenzyme (composed of ETFA and ETFB). The protein is Electron transfer flavoprotein regulatory factor 1 of Homo sapiens (Human).